The sequence spans 229 residues: MSLLAQLDQKIAANGGLIVSCQPVPDSPLDKPEIVAAMALAAEQAGAVAIRIEGVANLQATRAVVSVPIIGIVKRDLEDSPVRITAYIEDVDALAQAGADIIAIDGTDRPRPVPVETLLARIHHHGLLAMTDCSTPEDGLACQKLGAEIIGTTLSGYTTPETPEEPDLALVKTLSDAGCRVIAEGRYNTPAQAADAMRHGAWAVTVGSAITRLEHICQWYNTAMKKAVL.

Belongs to the NanE family.

It catalyses the reaction an N-acyl-D-glucosamine 6-phosphate = an N-acyl-D-mannosamine 6-phosphate. It participates in amino-sugar metabolism; N-acetylneuraminate degradation; D-fructose 6-phosphate from N-acetylneuraminate: step 3/5. Functionally, converts N-acetylmannosamine-6-phosphate (ManNAc-6-P) to N-acetylglucosamine-6-phosphate (GlcNAc-6-P). This Escherichia coli O8 (strain IAI1) protein is Putative N-acetylmannosamine-6-phosphate 2-epimerase.